A 975-amino-acid chain; its full sequence is Protein spalten (975 aa).

Disordered regions lie at residues Met-1–Gln-31 and Asn-64–Asn-99. Basic and acidic residues predominate over residues Asn-8–Ser-17. Residues Ser-21–Thr-70 are a coiled coil. Residues Phe-114 to Pro-458 enclose the G-alpha domain. Residues Thr-117–Thr-130 are G1 motif. Residues Gly-122–Thr-129, Ile-261–Lys-267, Gly-286–Lys-290, and Asn-373–Asp-376 each bind GTP. The interval Asp-259 to Lys-267 is G2 motif. The G3 motif stretch occupies residues Val-282 to Gln-291. The G4 motif stretch occupies residues Tyr-369–Asp-376. Residues Val-427 to Lys-432 are G5 motif. Disordered regions lie at residues Phe-455–Thr-520 and Asp-541–Lys-700. Low complexity-rich tracts occupy residues Asn-460–Ser-478, Leu-500–Thr-515, and Ser-544–Thr-587. Basic and acidic residues predominate over residues Pro-595–Gly-688. The 269-residue stretch at Glu-704–Leu-972 folds into the PPM-type phosphatase domain. Positions 749, 750, 920, and 963 each coordinate Mn(2+).

The protein in the N-terminal section; belongs to the G-alpha family. In the C-terminal section; belongs to the PP2C family. As to quaternary structure, g proteins are composed of 3 units; alpha, beta and gamma. The alpha chain contains the guanine nucleotide binding site. Requires Mg(2+) as cofactor. It depends on Mn(2+) as a cofactor.

It is found in the cytoplasm. The protein localises to the cytosol. Its subcellular location is the cell membrane. It catalyses the reaction O-phospho-L-seryl-[protein] + H2O = L-seryl-[protein] + phosphate. The enzyme catalyses O-phospho-L-threonyl-[protein] + H2O = L-threonyl-[protein] + phosphate. With respect to regulation, inhibited by 50 mM NaF (sodium fluoride). Functionally, involved in cell-type differentiation and morphogenesis. Dephosphorylates casein; in vitro. May also be involved as modulators or transducers in various transmembrane signaling systems. In Dictyostelium discoideum (Social amoeba), this protein is Protein spalten (spnA).